The sequence spans 109 residues: Flagellar hook-basal body complex protein FliE (109 aa).

The disordered stretch occupies residues 1 to 38 (MQAIHNDKSLLSPFSELNTDNRTKREESGNAFKEQKGG). Residues 19–38 (TDNRTKREESGNAFKEQKGG) are compositionally biased toward basic and acidic residues.

This sequence belongs to the FliE family.

It localises to the bacterial flagellum basal body. This chain is Flagellar hook-basal body complex protein FliE, found in Helicobacter pylori (strain G27).